Reading from the N-terminus, the 243-residue chain is Large ribosomal subunit protein uL2 (243 aa).

The segment at 202 to 243 is disordered; the sequence is HGGGRHQHVGQSSTVSRNAPPGAKVGSIAARKTGRAKIKDRR. Residues 233-243 are compositionally biased toward basic residues; it reads KTGRAKIKDRR.

The protein belongs to the universal ribosomal protein uL2 family. In terms of assembly, part of the 50S ribosomal subunit. Forms a bridge to the 30S subunit in the 70S ribosome.

One of the primary rRNA binding proteins. Required for association of the 30S and 50S subunits to form the 70S ribosome, for tRNA binding and peptide bond formation. It has been suggested to have peptidyltransferase activity; this is somewhat controversial. Makes several contacts with the 16S rRNA in the 70S ribosome. The polypeptide is Large ribosomal subunit protein uL2 (Cenarchaeum symbiosum (strain A)).